The primary structure comprises 361 residues: Probable cadicidin biosynthesis thioesterase (361 aa).

One can recognise a 4Fe-4S ferredoxin-type domain in the interval 2–29; that stretch reads RVTVDSEQCVGAGQCVLNAPEVFDQDDD. Residues 36-110 are disordered; it reads RADPTSGTTR…RRDSPVTTAD (75 aa). Residues 46-61 are compositionally biased toward basic residues; that stretch reads RSARRATCARRPRSSS. Basic and acidic residues-rich tracts occupy residues 62–74 and 94–104; these read RRTE…DRHR and TDRRQNHRRDS. The active site involves Ser201.

This sequence belongs to the thioesterase family.

It functions in the pathway antibiotic biosynthesis; candicidin biosynthesis. Its function is as follows. Probable thioesterase involved in the biosynthesis of candicidin. Could release the macrolide ring from the polyketide synthase. In Streptomyces griseus, this protein is Probable cadicidin biosynthesis thioesterase.